The sequence spans 396 residues: S-adenosylmethionine synthase (396 aa).

ATP is bound at residue H16. Residue D18 participates in Mg(2+) binding. Residue E44 coordinates K(+). The L-methionine site is built by E57 and Q100. Residues 100–110 (QSPDINQGVDR) are flexible loop. ATP is bound by residues 165–167 (DAK), 231–232 (KF), D240, 246–247 (RK), A263, and K267. D240 provides a ligand contact to L-methionine. K271 lines the L-methionine pocket.

This sequence belongs to the AdoMet synthase family. In terms of assembly, homotetramer; dimer of dimers. It depends on Mg(2+) as a cofactor. Requires K(+) as cofactor.

Its subcellular location is the cytoplasm. The enzyme catalyses L-methionine + ATP + H2O = S-adenosyl-L-methionine + phosphate + diphosphate. Its pathway is amino-acid biosynthesis; S-adenosyl-L-methionine biosynthesis; S-adenosyl-L-methionine from L-methionine: step 1/1. Catalyzes the formation of S-adenosylmethionine (AdoMet) from methionine and ATP. The overall synthetic reaction is composed of two sequential steps, AdoMet formation and the subsequent tripolyphosphate hydrolysis which occurs prior to release of AdoMet from the enzyme. This is S-adenosylmethionine synthase from Ectopseudomonas mendocina (strain ymp) (Pseudomonas mendocina).